Reading from the N-terminus, the 320-residue chain is Methionyl-tRNA formyltransferase (320 aa).

111-114 (SLLP) contributes to the (6S)-5,6,7,8-tetrahydrofolate binding site.

This sequence belongs to the Fmt family.

It carries out the reaction L-methionyl-tRNA(fMet) + (6R)-10-formyltetrahydrofolate = N-formyl-L-methionyl-tRNA(fMet) + (6S)-5,6,7,8-tetrahydrofolate + H(+). Its function is as follows. Attaches a formyl group to the free amino group of methionyl-tRNA(fMet). The formyl group appears to play a dual role in the initiator identity of N-formylmethionyl-tRNA by promoting its recognition by IF2 and preventing the misappropriation of this tRNA by the elongation apparatus. The protein is Methionyl-tRNA formyltransferase of Methylacidiphilum infernorum (isolate V4) (Methylokorus infernorum (strain V4)).